Here is a 554-residue protein sequence, read N- to C-terminus: Valerianol synthase TPS1F (554 aa).

The Mg(2+) site is built by D307 and D311. Residues 326 to 330 (VQRWD) carry the DDXXD motif motif. 3 residues coordinate Mg(2+): D452, S456, and E460.

It belongs to the terpene synthase family. Requires Mg(2+) as cofactor.

The enzyme catalyses (2E,6E)-farnesyl diphosphate + H2O = valerianol + diphosphate. The protein operates within secondary metabolite biosynthesis; terpenoid biosynthesis. Its function is as follows. Terpene synthase that catalyzes the biosynthesis of the terpene valerianol, which is a volatile compound of floral scent. The protein is Valerianol synthase TPS1F of Camellia hiemalis (Camellia).